The following is a 179-amino-acid chain: tRNA (cytidine(56)-2'-O)-methyltransferase (179 aa).

S-adenosyl-L-methionine is bound by residues Leu-82, Gly-112–Val-116, and Val-130–Glu-137.

It belongs to the aTrm56 family. Homodimer.

It localises to the cytoplasm. The enzyme catalyses cytidine(56) in tRNA + S-adenosyl-L-methionine = 2'-O-methylcytidine(56) in tRNA + S-adenosyl-L-homocysteine + H(+). Functionally, specifically catalyzes the AdoMet-dependent 2'-O-ribose methylation of cytidine at position 56 in tRNAs. The protein is tRNA (cytidine(56)-2'-O)-methyltransferase of Methanococcus maripaludis (strain C7 / ATCC BAA-1331).